The following is a 166-amino-acid chain: MFPMVTEFMNYGQQTIRAARYIGQGFMITLSHANRLPVTIQYPYEKLITSERFRGRIHFEFDKCIACEVCVRVCPIDLPVVDWKLETDIRKKRLLNYSIDFGICIFCGNCVEYCPTNCLSMTEEYELSTYDRHELNYNQIALGRLPMSIIDDYTIRTIFNLPEIKP.

4Fe-4S ferredoxin-type domains are found at residues 55 to 84 (GRIH…VDWK) and 95 to 124 (LNYS…MTEE). [4Fe-4S] cluster is bound by residues Cys-64, Cys-67, Cys-70, Cys-74, Cys-104, Cys-107, Cys-110, and Cys-114.

The protein belongs to the complex I 23 kDa subunit family. In terms of assembly, NDH is composed of at least 16 different subunits, 5 of which are encoded in the nucleus. [4Fe-4S] cluster serves as cofactor.

Its subcellular location is the plastid. The protein localises to the chloroplast thylakoid membrane. It carries out the reaction a plastoquinone + NADH + (n+1) H(+)(in) = a plastoquinol + NAD(+) + n H(+)(out). The enzyme catalyses a plastoquinone + NADPH + (n+1) H(+)(in) = a plastoquinol + NADP(+) + n H(+)(out). Its function is as follows. NDH shuttles electrons from NAD(P)H:plastoquinone, via FMN and iron-sulfur (Fe-S) centers, to quinones in the photosynthetic chain and possibly in a chloroplast respiratory chain. The immediate electron acceptor for the enzyme in this species is believed to be plastoquinone. Couples the redox reaction to proton translocation, and thus conserves the redox energy in a proton gradient. This chain is NAD(P)H-quinone oxidoreductase subunit I, chloroplastic, found in Rensonia salvadorica.